The sequence spans 563 residues: Beta-catenin-like protein 1 (563 aa).

At methionine 1 the chain carries N-acetylmethionine. The interval 1–49 is disordered; it reads MDVGELLSYQPNRGTKRPRDDEEEEQKMRRKQTGTRERGRYREEEMTVV. A Nuclear localization signal motif is present at residues 16 to 33; the sequence is KRPRDDEEEEQKMRRKQT. The segment covering 34 to 45 has biased composition (basic and acidic residues); sequence GTRERGRYREEE. HEAT repeat units follow at residues 79–129 and 134–176; these read ESSV…VVAT and YHLL…TLHE. Lysine 91 is subject to N6-acetyllysine. The Nuclear export signal (NES) signature appears at 130–140; it reads MPDLYHLLVEL. ARM repeat units lie at residues 178-228, 229-273, 274-323, 325-363, and 364-417; these read EEGA…MAEF, RPEM…LQDN, DENR…CLML, SNRE…AMIG, and PEGT…LLRN. Serine 389 bears the Phosphoserine mark. The stretch at 476-540 forms a coiled coil; that stretch reads DTEEEFYLRR…HIIKEYAENI (65 aa). A Phosphoserine modification is found at serine 545.

In terms of assembly, component of the PRP19-CDC5L splicing complex composed of a core complex comprising a homotetramer of PRPF19, CDC5L, PLRG1 and BCAS2, and at least three less stably associated proteins CTNNBL1, CWC15 and HSPA8. Interacts directly with CWC15 and CDC5L in the complex. Interacts with AICDA; the interaction is important for the antibody diversification activity of AICDA. Interacts with PRPF31 (via its NLS). Interacts (via its N-terminal NLS) with KPNA1 and KPNA2. As to expression, widely expressed with highest levels in skeletal muscle, placenta, heart, spleen, testis and thyroid.

The protein resides in the nucleus. It localises to the cytoplasm. Its function is as follows. Component of the PRP19-CDC5L complex that forms an integral part of the spliceosome and is required for activating pre-mRNA splicing. Participates in AID/AICDA-mediated somatic hypermutation (SHM) and class-switch recombination (CSR), 2 processes resulting in the production of high-affinity, mutated isotype-switched antibodies. This chain is Beta-catenin-like protein 1 (CTNNBL1), found in Homo sapiens (Human).